Here is an 875-residue protein sequence, read N- to C-terminus: Valine--tRNA ligase (875 aa).

Positions 43–53 (PNVTGVLHMGH) match the 'HIGH' region motif. The 'KMSKS' region signature appears at 534 to 538 (KMSKS). Residue Lys-537 participates in ATP binding. Residues 805–875 (GNLINTEEEL…LKESIAALKK (71 aa)) are a coiled coil.

Belongs to the class-I aminoacyl-tRNA synthetase family. ValS type 1 subfamily. As to quaternary structure, monomer.

It localises to the cytoplasm. It carries out the reaction tRNA(Val) + L-valine + ATP = L-valyl-tRNA(Val) + AMP + diphosphate. In terms of biological role, catalyzes the attachment of valine to tRNA(Val). As ValRS can inadvertently accommodate and process structurally similar amino acids such as threonine, to avoid such errors, it has a 'posttransfer' editing activity that hydrolyzes mischarged Thr-tRNA(Val) in a tRNA-dependent manner. In Phocaeicola vulgatus (strain ATCC 8482 / DSM 1447 / JCM 5826 / CCUG 4940 / NBRC 14291 / NCTC 11154) (Bacteroides vulgatus), this protein is Valine--tRNA ligase.